Reading from the N-terminus, the 244-residue chain is 5-oxoprolinase subunit A (244 aa).

It belongs to the LamB/PxpA family. As to quaternary structure, forms a complex composed of PxpA, PxpB and PxpC.

The enzyme catalyses 5-oxo-L-proline + ATP + 2 H2O = L-glutamate + ADP + phosphate + H(+). Its function is as follows. Catalyzes the cleavage of 5-oxoproline to form L-glutamate coupled to the hydrolysis of ATP to ADP and inorganic phosphate. In Escherichia coli (strain SMS-3-5 / SECEC), this protein is 5-oxoprolinase subunit A.